We begin with the raw amino-acid sequence, 901 residues long: MIPGMRATPTESFSFVYSCDLQTNVQVKVAEFEGIFRDVLNPVRRLNQLFAEITVYCNNQQIGYPVCTSFHTPPDSSQLARQKLIQKWNEWLTLPIRYSDLSRDAFLHITIWEHEDDEIVNNSTFSRRLVAQSKLSMFSKRGILKSGVIDVQMNVSTTPDPFVKQPETWKYSDAWGDEIDLLFKQVTRQSRGLVEDVPWLDPFASRRIEMIRAKYKYSSPDRHVFLVLEMAAIRLGPTFYKVVYYEDETKNMRVSTSVNGGVGIVSACTRYCVADPELLLESLAEVKHSAMTRRIRDVEDERHRQVKPNKQAKDRLETIVNLPSSQVLTREQRDLVWKFRHYLRQFPKALNKYLRSVNWVHPQEVKTALALMNDWELIEAEDALELLSSAFTHPAVRAYSVSRLLEAASPEQVLLYLPQLVQALKYEQGQQLPEEGNPVPVVSEEEGKIPSVATTPTEELEGRDMTVVTKKEARKAASGDLATFLIDYALASPKVSNYLYWHLKTEIESTKESKEEHSKMYQNIQDRLMEALVKRPDTRAQVDSLHQQQIFVEDLIILMNEAKARGGRLNESKSAEFRTMLSRAKHMLDLKGVHLPLDPSFRLSSVIPDTASFFKSEMMPAKISFKVLQPNGKADRNIPEEYTVIFKTGDDLRQDQLIQQMVRLIDIILKKGQLDLKLTPYLVLSTGVGQGFVQCIKSKPLRAIQEQYKAHKMDCIREAMKELRPGDGPFGIEPNVIDNYVRSLAGYSVIMYILGLGDRHLDNLLLCENGKLFHVDFGFILGRDPKPMPPPMKLTSEMVQVMGGVKSKQFLEFVQHVDSAYRILRRHSNVLLNLFSLMLDAGIPDIAAEPDKAIFKIEQRLRLDLSDEAATKHIFTQIESSLNAKMAMISDIIHAYKQNLM.

Positions Leu21–Gln189 constitute a C2 PI3K-type domain. A PIK helical domain is found at Arg302 to Arg527. One can recognise a PI3K/PI4K catalytic domain in the interval Ile607–Met886. Positions Phe613–Met619 are G-loop. The segment at Gly755–Asn763 is catalytic loop. The interval His774–Thr795 is activation loop.

Belongs to the PI3/PI4-kinase family. As to quaternary structure, interacts with bec-1. May interact with dyn-1. It depends on Mn(2+) as a cofactor. Ubiquitous.

It localises to the nucleus outer membrane. Its subcellular location is the cytoplasm. The protein localises to the cytoplasmic granule. The protein resides in the cell projection. It is found in the phagocytic cup. It catalyses the reaction a 1,2-diacyl-sn-glycero-3-phospho-(1D-myo-inositol) + ATP = a 1,2-diacyl-sn-glycero-3-phospho-(1D-myo-inositol-3-phosphate) + ADP + H(+). Its activity is regulated as follows. Inhibited by wortmannin. Catalytic subunit of the PI3K complex that mediates formation of phosphatidylinositol 3-phosphate. Together with bec-1, mediates the production of phosphatidylinositol 3-phosphate on intracellular vesicles and thereby regulates membrane trafficking. Plays a role in endosome-to-Golgi retrograde transport of mig-14. Involved in clearance of apoptotic cell corpses by phagosomes. Phagosome maturation requires two sequential and non-overlapping pulses of phosphatidylinositol-3-phosphate (PI3P) on the vesicle surface which mediates recruitment of sortins snx-1 and lst-4 and small GTPases rab-5, rab-2 and rab-7, downstream of dynamin dyn-1. The first pulse is initiated by piki-1, then maintained by vps-34 which also produces the second pulse. Required for embryonic development. Together with bec-1, involved in L3/L4 larval molting stage probably by regulating cuticle shedding. Regulates the expansion of the nucleus outer membrane. Involved in the secretion and localization of lrp-1 at the apical surface of hyp7 syncytium. May regulate endocytosis in hypodermal cells. May play a role in the formation of gut granules (a lysosome-related organelle). Plays a role in germ stem cell proliferation during larval development. This chain is Phosphatidylinositol 3-kinase catalytic subunit type 3, found in Caenorhabditis elegans.